The following is a 355-amino-acid chain: MASNNNCAYELIEAEAQSWDYILSYLRPSCIKCAIQLGIPDILHKNADPIMSLSDLIAALPNLNPSKTTFIPILMRVLVDFGLFNYHQQQGDGYSLTTVGRLLVENHHFGNRSFFLFAQHPVVLNTAASVGDWLKDDLRTAFETADGKSHWDYCGADPEFNGVFNDAMAGDSRLMSNLLISDCCAGVFEGLTSLVDIGGGTGAVAMAIAGAFPSLKCIVLDLPHVIADRKGSGNLEFVAGSMFDKIPHANAILLKWILHNWDDEDCVKLLKKCKESISSRENGGKVIIIDMIMEDNYNNKQLVQSQHLMDLIMRITYASKERTEKEWEKLFLEAGFSGYKIITSLGLRSLIEIYP.

Asp-221 serves as a coordination point for S-adenosyl-L-methionine. His-259 serves as the catalytic Proton acceptor.

The protein belongs to the class I-like SAM-binding methyltransferase superfamily. Cation-independent O-methyltransferase family. In terms of assembly, homodimer. Mainly expressed in leaves secreting glandular trichomes types 1 and 4 and, to a lesser extent, in storage trichomes type 6.

The catalysed reaction is quercetin + S-adenosyl-L-methionine = rhamnetin + S-adenosyl-L-homocysteine + H(+). The enzyme catalyses kaempferol + S-adenosyl-L-methionine = kaempferide + S-adenosyl-L-homocysteine + H(+). It catalyses the reaction myricetin + S-adenosyl-L-methionine = 7-O-methylmyricetin + S-adenosyl-L-homocysteine + H(+). It carries out the reaction kaempferide + S-adenosyl-L-methionine = 7,4'-O-dimethylkaempferol + S-adenosyl-L-homocysteine + H(+). The catalysed reaction is isorhamnetin + S-adenosyl-L-methionine = 3',4'-O-dimethylquercetin + S-adenosyl-L-homocysteine + 2 H(+). The enzyme catalyses 3',4',5,7-tetrahydroxy-3-methoxyflavone + S-adenosyl-L-methionine = 3',4',5-trihydroxy-3,7-dimethoxyflavone + S-adenosyl-L-homocysteine + H(+). It catalyses the reaction rhamnetin + S-adenosyl-L-methionine = 7,4'-O-dimethylquercetin + S-adenosyl-L-homocysteine + H(+). It carries out the reaction syringetin + S-adenosyl-L-methionine = 7,3',5'-O-trimethylmyricetin + S-adenosyl-L-homocysteine + H(+). The catalysed reaction is 3',4',5'-O-trimethylmyricetin + S-adenosyl-L-methionine = 7,3',4',5'-O-tetramethylmyricetin + S-adenosyl-L-homocysteine. It participates in flavonoid metabolism. Flavonoid 7/4'-O-methyltransferase involved in the biosynthesis of polymethoxylated flavonoids natural products such as myricetin derivatives, aroma compounds possessing antioxidant properties and exhibiting pharmacological activities such as anti-carcinogen, anti-viral, anti-thrombotic, anti-diabetic, anti-atherosclerotic, and anti-inflammatory effects. Catalyzes S-adenosylmethionine-dependent regioselective 7/4'-O-methylation of flavonoids; active on various hydroxylated flavonoid substrates, including myricetin, quercetin and kaempferol. Mediates the formation of 4'-methyl derivatives from kaempferol, 3'-methyl quercetin (isorhamnetin), 7-methyl quercetin (rhamnetin) and 3'-methyl myricetin, producing 4'-methyl kaempferol (kaempferide), 3',4'-dimethyl quercetin (4'-O-methyl isorhamnetin), 7,4'-dimethyl quercetin (4'-O-methyl rhamnetin, rhamnacene) and 3',4'-dimethyl myricetin, respectively. Triggers the 7-O-methylation of quercetin, myricetin, 4'-methyl kaempferol (kaempferide), 3-methyl quercetin, 3',5'-dimethyl myricetin (syringetin) and 3',4',5'-trimethyl myricetin, thus leading to production of 7-methyl quercetin (rhamnetin), 7-methyl myricetin, 7,4'-dimethyl kaempferol (7-O-methyl kaempferide), 3,7-dimethyl quercetin, 7,3',5'-trimethyl myricetin (7-O-methyl syringetin) and 7,3',4',5'-tetramethyl myricetin, respectively. In Solanum habrochaites (Wild tomato), this protein is Myricetin 7/4'-O-methyltransferase 2.